The primary structure comprises 370 residues: MSADCEGNSTCPANSTEEDPPVGMEGQGSLKLVFTVLSAVMVGLVMFSFGCSVESRKLWLHLRRPWGIAVGLLCQFGLMPLTAYLLAIGFGLKPFQAIAVLIMGSCPGGTVSNVLTFWVDGDMDLSISMTTCSTVAALGMMPLCLYVYTRSWTLPQSLTIPYQSIGITLVSLVVPVASGIYVNYRWPKQATFILKVGAAVGGMLLLVVAVTGVVLAKGWNIDVTLLVISCIFPLVGHVMGFLLAFLTHQSWQRCRTISIETGAQNIQLCIAMMQLSFSAEYLVQLLNFALAYGLFQVLHGLLIVAAYQAYKRRQKSQYRRQHPECQDISSEKQPRETSAFLDKGAEAAVTLGLEQHHRTAELTSHVPSCE.

The interval 1–24 (MSADCEGNSTCPANSTEEDPPVGM) is disordered. Residues 1 to 32 (MSADCEGNSTCPANSTEEDPPVGMEGQGSLKL) are Extracellular-facing. N-linked (GlcNAc...) asparagine glycans are attached at residues N8 and N14. A helical membrane pass occupies residues 33 to 53 (VFTVLSAVMVGLVMFSFGCSV). Residues 54–67 (ESRKLWLHLRRPWG) are Cytoplasmic-facing. Residues 68–88 (IAVGLLCQFGLMPLTAYLLAI) traverse the membrane as a helical segment. Residues 89 to 97 (GFGLKPFQA) lie on the Extracellular side of the membrane. Residues 98–118 (IAVLIMGSCPGGTVSNVLTFW) traverse the membrane as a helical segment. Over 119–126 (VDGDMDLS) the chain is Cytoplasmic. Residues 127–147 (ISMTTCSTVAALGMMPLCLYV) traverse the membrane as a helical segment. Residues 148–159 (YTRSWTLPQSLT) are Extracellular-facing. The helical transmembrane segment at 160–180 (IPYQSIGITLVSLVVPVASGI) threads the bilayer. The Cytoplasmic segment spans residues 181 to 195 (YVNYRWPKQATFILK). Residues 196–216 (VGAAVGGMLLLVVAVTGVVLA) form a helical membrane-spanning segment. Over 217-224 (KGWNIDVT) the chain is Extracellular. The chain crosses the membrane as a helical span at residues 225 to 245 (LLVISCIFPLVGHVMGFLLAF). The Cytoplasmic segment spans residues 246–265 (LTHQSWQRCRTISIETGAQN). Residues 266–283 (IQLCIAMMQLSFSAEYLV) traverse the membrane as a helical segment. Position 284 (Q284) is a topological domain, extracellular. Residues 285 to 305 (LLNFALAYGLFQVLHGLLIVA) form a helical membrane-spanning segment. At 306–370 (AYQAYKRRQK…ELTSHVPSCE (65 aa)) the chain is on the cytoplasmic side.

Belongs to the bile acid:sodium symporter (BASS) (TC 2.A.28) family. Post-translationally, glycosylated. As to expression, highly expressed in heart, lung, spleen and adrenal gland. Moderately expressed in skeletal muscle, testis and small intestine.

The protein localises to the membrane. It catalyses the reaction estrone 3-sulfate(out) + 2 Na(+)(out) = estrone 3-sulfate(in) + 2 Na(+)(in). It carries out the reaction 17beta-estradiol 3-sulfate(out) + 2 Na(+)(out) = 17beta-estradiol 3-sulfate(in) + 2 Na(+)(in). The enzyme catalyses dehydroepiandrosterone 3-sulfate(out) + 2 Na(+)(out) = dehydroepiandrosterone 3-sulfate(in) + 2 Na(+)(in). The catalysed reaction is androst-5-ene-diol 3-sulfate(out) + 2 Na(+)(out) = androst-5-ene-diol 3-sulfate(in) + 2 Na(+)(in). It catalyses the reaction pregnenolone sulfate(out) + 2 Na(+)(out) = pregnenolone sulfate(in) + 2 Na(+)(in). It carries out the reaction taurolithocholate 3-sulfate(out) + 2 Na(+)(out) = taurolithocholate 3-sulfate(in) + 2 Na(+)(in). The enzyme catalyses androsterone 3alpha-sulfate(out) + 2 Na(+)(out) = androsterone 3alpha-sulfate(in) + 2 Na(+)(in). The catalysed reaction is 5alpha-dihydrotestosterone sulfate(out) + 2 Na(+)(out) = 5alpha-dihydrotestosterone sulfate(in) + 2 Na(+)(in). It catalyses the reaction 17beta-estradiol 17-sulfate(out) + 2 Na(+)(out) = 17beta-estradiol 17-sulfate(in) + 2 Na(+)(in). It carries out the reaction 17alpha-hydroxypregnenolone 3-sulfate(out) + 2 Na(+)(out) = 17alpha-hydroxypregnenolone 3-sulfate(in) + 2 Na(+)(in). The enzyme catalyses epiandrosterone 3-sulfate(out) + 2 Na(+)(out) = epiandrosterone 3-sulfate(in) + 2 Na(+)(in). The catalysed reaction is epitestosterone 17-sulfate(out) + 2 Na(+)(out) = epitestosterone 17-sulfate(in) + 2 Na(+)(in). It catalyses the reaction testosterone 17-sulfate(out) + 2 Na(+)(out) = testosterone 17-sulfate(in) + 2 Na(+)(in). It carries out the reaction 16alpha-hydroxydehydroepiandrosterone 3-sulfate(out) + 2 Na(+)(out) = 16alpha-hydroxydehydroepiandrosterone 3-sulfate(in) + 2 Na(+)(in). Its function is as follows. Transports sulfoconjugated steroid hormones from the extracellular compartment into the cytosol in a sodium-dependent manner without hydrolysis. Steroid sulfate hormones are commonly considered to be biologically inactive metabolites, that may be activated by steroid sulfatases into free steroids. May play an important role by delivering sulfoconjugated steroids to specific target cells in reproductive organs. May play a role transporting the estriol precursor 16alpha-hydroxydehydroepiandrosterone 3-sulfate (16a-OH-DHEAS) at the fetal blood vessel endothelium. Can also transport other sulfoconjugated molecules such as taurolithocholic acid-3-sulfate and sulfoconjugated pyrenes. This chain is Sodium-dependent organic anion transporter (Slc10a6), found in Rattus norvegicus (Rat).